The primary structure comprises 267 residues: Acetyl-coenzyme A carboxylase carboxyl transferase subunit beta, chloroplastic (267 aa).

The CoA carboxyltransferase N-terminal domain maps to 12-267; sequence LWKKCDSCNI…TIHMILDLHN (256 aa). 4 residues coordinate Zn(2+): cysteine 16, cysteine 19, cysteine 35, and cysteine 38. The C4-type zinc-finger motif lies at 16 to 38; the sequence is CDSCNILISKFDFYKHDKVCPEC.

This sequence belongs to the AccD/PCCB family. Acetyl-CoA carboxylase is a heterohexamer composed of biotin carboxyl carrier protein, biotin carboxylase and 2 subunits each of ACCase subunit alpha and ACCase plastid-coded subunit beta (accD). Requires Zn(2+) as cofactor.

It is found in the plastid. It localises to the chloroplast stroma. It carries out the reaction N(6)-carboxybiotinyl-L-lysyl-[protein] + acetyl-CoA = N(6)-biotinyl-L-lysyl-[protein] + malonyl-CoA. It participates in lipid metabolism; malonyl-CoA biosynthesis; malonyl-CoA from acetyl-CoA: step 1/1. Functionally, component of the acetyl coenzyme A carboxylase (ACC) complex. Biotin carboxylase (BC) catalyzes the carboxylation of biotin on its carrier protein (BCCP) and then the CO(2) group is transferred by the transcarboxylase to acetyl-CoA to form malonyl-CoA. This chain is Acetyl-coenzyme A carboxylase carboxyl transferase subunit beta, chloroplastic, found in Cyanidium caldarium (Red alga).